Here is a 421-residue protein sequence, read N- to C-terminus: Ethanolamine-phosphate cytidylyltransferase (421 aa).

The helical transmembrane segment at 8–28 (IVGSCIVGGAAFAVGASFLHL) threads the bilayer. The disordered stretch occupies residues 203 to 227 (SRSSLQRQFSHGHSSPKFEDGASSA). A compositionally biased stretch (polar residues) spans 204 to 215 (RSSLQRQFSHGH). Residues 262-263 (AF), 270-273 (HVEI), R298, 346-349 (HGTV), and 377-381 (SPLDI) contribute to the CTP site. Residues 402–421 (AKKEASEKKYYEQKSFVSGD) form a disordered region. Residues 403–413 (KKEASEKKYYE) show a composition bias toward basic and acidic residues. S416 carries the phosphoserine modification.

This sequence belongs to the cytidylyltransferase family. Expressed in root tip, lateral root primordia, leaves, shoot apex, stem vascular bundles, pollen and embryos.

The protein localises to the mitochondrion outer membrane. The catalysed reaction is phosphoethanolamine + CTP + H(+) = CDP-ethanolamine + diphosphate. Its pathway is phospholipid metabolism; phosphatidylethanolamine biosynthesis; phosphatidylethanolamine from ethanolamine: step 2/3. Its function is as follows. Plays an important role in the biosynthesis of the phospholipid phosphatidylethanolamine. Catalyzes the formation of CDP-ethanolamine. Essential for early embryonic development. The polypeptide is Ethanolamine-phosphate cytidylyltransferase (Arabidopsis thaliana (Mouse-ear cress)).